Here is an 884-residue protein sequence, read N- to C-terminus: MHPFSRLFRNIQSLGEEEVQELLGPPEDALPLLAGEDLNHRVADALNLHLPTADLQWVHKTNAITGLYSNQAAQFNPHWIQPEFPELHLHNDLIQKLQQYFGPLTINEKRKLQLNFPARFFPKATKYFPLIKGIKNNYPNFALEHFFATANYLWTLWEAGILYLRKNQTTLTFKGKPYSWEHRQLVQHNGQQHKSHLQSRQNSSMVACSGHLLHNHLPSEPVSVSTRNLSNNISDKSQKSTRTGLCSYKQVQTDRLEHLARISCGSKITIGQQGSSPKTSYKSISSNFRNQTWAYNSSRNSGHTTWFSSASNSNKSRSREKAYSSNSTSQRYSPPLNYEKSDFSSPGVRGRITRLDNNGTLPQCLWRSFYNTKPCGSYCIHHIVSSLDDWGPCTVTGDVTIKSPRTPRRITGGVFLVDKNPNNSSESRLVVDFSQFSRGHTRVHWPKFAVPNLQTLANLLSTNLQWLSLDVSAAFYHIPISPAAVPHLLVGSPGLERFNTCMSSSTHNGNDSQLQTMHALCTRHVYSSLLLLFKTYGRKLHLLAHPFIMGFRKLPMGVGLSPFLLAQFTSAIASMVRRNFPHCVVFAYMDDLVLGARTSEHLTAIYSHICSVFLDLGIHLNVNKTKWWGNHLHFMGYVITSSGVLPQDKHVKKLSRYLRSVPVNQPLDYKICERLTGILNYVAPFTLCGYAALMPLYHAIASRTAFIFSSLYKSWLLSLYEELWPVVRQRGVVCTVFADATPTGWGIATTCQLLSGTFAFPLPIATAELIAACLARCWTGARLLGTDNSVVLSGKLTSFPWLLACVANWILRGTSFCYVPSALNPADLPSRGLLPVLRPLPRLRLRPQTSRISLWAASPPVSPRRPVRVAWSSPVQTCEPWIPP.

Residues 1–184 (MHPFSRLFRN…GKPYSWEHRQ (184 aa)) are terminal protein domain (TP). Residues 185–387 (LVQHNGQQHK…YCIHHIVSSL (203 aa)) form a spacer region. Disordered stretches follow at residues 218 to 241 (PSEP…QKST) and 299 to 345 (RNSG…DFSS). Polar residues-rich tracts occupy residues 222–241 (VSVS…QKST) and 323–332 (YSSNSTSQRY). The polymerase/reverse transcriptase domain (RT) stretch occupies residues 388-729 (DDWGPCTVTG…YEELWPVVRQ (342 aa)). One can recognise a Reverse transcriptase domain in the interval 398–639 (DVTIKSPRTP…NHLHFMGYVI (242 aa)). The Mg(2+) site is built by aspartate 470, aspartate 590, and aspartate 591.

Belongs to the hepadnaviridae P protein family.

The enzyme catalyses DNA(n) + a 2'-deoxyribonucleoside 5'-triphosphate = DNA(n+1) + diphosphate. It carries out the reaction Endonucleolytic cleavage to 5'-phosphomonoester.. With respect to regulation, activated by host HSP70 and HSP40 in vitro to be able to bind the epsilon loop of the pgRNA. Because deletion of the RNase H region renders the protein partly chaperone-independent, the chaperones may be needed indirectly to relieve occlusion of the RNA-binding site by this domain. Inhibited by several reverse-transcriptase inhibitors: Lamivudine, Adefovir and Entecavir. Multifunctional enzyme that converts the viral RNA genome into dsDNA in viral cytoplasmic capsids. This enzyme displays a DNA polymerase activity that can copy either DNA or RNA templates, and a ribonuclease H (RNase H) activity that cleaves the RNA strand of RNA-DNA heteroduplexes in a partially processive 3'- to 5'-endonucleasic mode. Neo-synthesized pregenomic RNA (pgRNA) are encapsidated together with the P protein, and reverse-transcribed inside the nucleocapsid. Initiation of reverse-transcription occurs first by binding the epsilon loop on the pgRNA genome, and is initiated by protein priming, thereby the 5'-end of (-)DNA is covalently linked to P protein. Partial (+)DNA is synthesized from the (-)DNA template and generates the relaxed circular DNA (RC-DNA) genome. After budding and infection, the RC-DNA migrates in the nucleus, and is converted into a plasmid-like covalently closed circular DNA (cccDNA). The activity of P protein does not seem to be necessary for cccDNA generation, and is presumably released from (+)DNA by host nuclear DNA repair machinery. This chain is Protein P, found in Marmota monax (Woodchuck).